The chain runs to 412 residues: MGIKGLTKLLAEHAPGAAVRRRVEDYRGRVVAIDTSLSIYQFLIVVGRKGTEVLTNEAGEVTSHLQGMLNRTVRILEAGIKPVFVFDGEPPDMKKKELAKRSLKRDGSSEDLNRAIEVGDEDLIEKFSKRTVKVTKKHNEDCKRLLSLMGVPVVQAPGEAEAQCAALCENHKVFAIASEDMDSLTFGARRFLRHLTDLSFKRSPVTEFEVSKVLEELGLTMDQFIDLCILSGCDYCENIRGIGGQRALKLIRQHGYIEEVVQNLSQTRYSVPEDWPYQEVRALFKEPNVCTDIPDFLWTPPDEEGLINFLAAENNFSPDRVVKSVEKIKAANDKFSLGRGKLLAPVANLTGSTSTAGKEPKCILGGPGQVMKARSPLQVCKSSSLNFIHDNSKAFMLGRRSGFLRISTYASI.

The segment at 1–105 (MGIKGLTKLL…KELAKRSLKR (105 aa)) is N-domain. Residue aspartate 34 participates in Mg(2+) binding. Arginine 71 serves as a coordination point for DNA. Aspartate 87, glutamate 159, glutamate 161, aspartate 180, and aspartate 182 together coordinate Mg(2+). Residues 123–254 (LIEKFSKRTV…QRALKLIRQH (132 aa)) form an I-domain region. Glutamate 159 is a DNA binding site. 2 residues coordinate DNA: glycine 232 and aspartate 234. Aspartate 234 serves as a coordination point for Mg(2+).

This sequence belongs to the XPG/RAD2 endonuclease family. FEN1 subfamily. Interacts with PCNA. Three molecules of FEN1 bind to one PCNA trimer with each molecule binding to one PCNA monomer. PCNA stimulates the nuclease activity without altering cleavage specificity. Requires Mg(2+) as cofactor. Post-translationally, phosphorylated. Phosphorylation upon DNA damage induces relocalization to the nuclear plasma.

It localises to the nucleus. Its subcellular location is the nucleolus. The protein resides in the nucleoplasm. It is found in the mitochondrion. Its function is as follows. Structure-specific nuclease with 5'-flap endonuclease and 5'-3' exonuclease activities involved in DNA replication and repair. During DNA replication, cleaves the 5'-overhanging flap structure that is generated by displacement synthesis when DNA polymerase encounters the 5'-end of a downstream Okazaki fragment. It enters the flap from the 5'-end and then tracks to cleave the flap base, leaving a nick for ligation. Also involved in the long patch base excision repair (LP-BER) pathway, by cleaving within the apurinic/apyrimidinic (AP) site-terminated flap. Acts as a genome stabilization factor that prevents flaps from equilibrating into structures that lead to duplications and deletions. Also possesses 5'-3' exonuclease activity on nicked or gapped double-stranded DNA, and exhibits RNase H activity. Also involved in replication and repair of rDNA and in repairing mitochondrial DNA. The polypeptide is Flap endonuclease 1-B (Oryza sativa subsp. indica (Rice)).